We begin with the raw amino-acid sequence, 211 residues long: Thymidylate kinase (211 aa).

11–18 (GPDGAGKT) lines the ATP pocket.

Belongs to the thymidylate kinase family.

It catalyses the reaction dTMP + ATP = dTDP + ADP. Functionally, phosphorylation of dTMP to form dTDP in both de novo and salvage pathways of dTTP synthesis. This is Thymidylate kinase from Streptococcus agalactiae serotype Ia (strain ATCC 27591 / A909 / CDC SS700).